The primary structure comprises 382 residues: Lipid-A-disaccharide synthase (382 aa).

The protein belongs to the LpxB family.

It catalyses the reaction 2-N,3-O-bis[(3R)-3-hydroxytetradecanoyl]-alpha-D-glucosaminyl 1-phosphate + UDP-2-N,3-O-bis[(3R)-3-hydroxytetradecanoyl]-alpha-D-glucosamine = lipid A disaccharide (E. coli) + UDP + H(+). The catalysed reaction is a lipid X + a UDP-2-N,3-O-bis[(3R)-3-hydroxyacyl]-alpha-D-glucosamine = a lipid A disaccharide + UDP + H(+). Its pathway is glycolipid biosynthesis; lipid IV(A) biosynthesis; lipid IV(A) from (3R)-3-hydroxytetradecanoyl-[acyl-carrier-protein] and UDP-N-acetyl-alpha-D-glucosamine: step 5/6. Functionally, condensation of UDP-2,3-diacylglucosamine and 2,3-diacylglucosamine-1-phosphate to form lipid A disaccharide, a precursor of lipid A, a phosphorylated glycolipid that anchors the lipopolysaccharide to the outer membrane of the cell. The polypeptide is Lipid-A-disaccharide synthase (Escherichia coli (strain SMS-3-5 / SECEC)).